A 73-amino-acid chain; its full sequence is UPF0154 protein MYCGA5700 (73 aa).

The helical transmembrane segment at 5–25 (LALGLSIPLCLIVGAFVGYFV) threads the bilayer.

It belongs to the UPF0154 family.

The protein localises to the membrane. The sequence is that of UPF0154 protein MYCGA5700 from Mycoplasmoides gallisepticum (strain R(low / passage 15 / clone 2)) (Mycoplasma gallisepticum).